Reading from the N-terminus, the 317-residue chain is Transaldolase (317 aa).

Catalysis depends on lysine 132, which acts as the Schiff-base intermediate with substrate.

It belongs to the transaldolase family. Type 1 subfamily. Homodimer.

It is found in the cytoplasm. It catalyses the reaction D-sedoheptulose 7-phosphate + D-glyceraldehyde 3-phosphate = D-erythrose 4-phosphate + beta-D-fructose 6-phosphate. It participates in carbohydrate degradation; pentose phosphate pathway; D-glyceraldehyde 3-phosphate and beta-D-fructose 6-phosphate from D-ribose 5-phosphate and D-xylulose 5-phosphate (non-oxidative stage): step 2/3. Functionally, transaldolase is important for the balance of metabolites in the pentose-phosphate pathway. This chain is Transaldolase, found in Edwardsiella ictaluri (strain 93-146).